Reading from the N-terminus, the 412-residue chain is Polyferredoxin protein MvhB (412 aa).

4Fe-4S ferredoxin-type domains lie at 2–29, 30–57, 67–96, 97–127, 138–166, 168–197, 207–236, 238–266, 276–305, 314–345, 357–386, and 385–412; these read IIVN…VTPE, DVIY…LEDL, GRIV…LDEG, KVKK…VEGI, EGPI…LDKV, GVIE…ISGR, KKFE…PRTS, LTVE…LEVE, EGLV…VVTK, EKVD…LVDM, KRVQ…LTDE, and DEKV…LSLK. [4Fe-4S] cluster contacts are provided by Cys9, Cys12, Cys15, and Cys19. [4Fe-4S] cluster is bound by residues Cys76, Cys79, Cys82, Cys86, Cys107, Cys110, Cys113, Cys117, Cys146, Cys149, Cys152, Cys156, Cys177, Cys180, Cys183, Cys187, Cys216, Cys219, Cys222, Cys226, Cys246, Cys249, Cys252, and Cys256. The [4Fe-4S] cluster site is built by Cys325, Cys328, Cys331, Cys335, Cys366, Cys369, Cys372, Cys376, Cys394, Cys397, Cys400, and Cys404.

[4Fe-4S] cluster is required as a cofactor.

In Methanothermobacter thermautotrophicus (strain ATCC 29096 / DSM 1053 / JCM 10044 / NBRC 100330 / Delta H) (Methanobacterium thermoautotrophicum), this protein is Polyferredoxin protein MvhB (mvhB).